Consider the following 407-residue polypeptide: Serine/threonine transporter SstT (407 aa).

The next 9 helical transmembrane spans lie at 12–32 (GNLI…GISS), 42–62 (LGIL…FILI), 81–101 (IIIL…LANF), 141–161 (ALSS…GIAL), 179–199 (VLKI…GLVA), 218–238 (ILLV…IVFF), 245–267 (FPLI…SSAA), 288–308 (ISIP…IAIL), and 330–350 (IIAT…LLLI).

It belongs to the dicarboxylate/amino acid:cation symporter (DAACS) (TC 2.A.23) family.

Its subcellular location is the cell inner membrane. It catalyses the reaction L-serine(in) + Na(+)(in) = L-serine(out) + Na(+)(out). The enzyme catalyses L-threonine(in) + Na(+)(in) = L-threonine(out) + Na(+)(out). Functionally, involved in the import of serine and threonine into the cell, with the concomitant import of sodium (symport system). In Campylobacter jejuni subsp. jejuni serotype O:23/36 (strain 81-176), this protein is Serine/threonine transporter SstT.